A 253-amino-acid polypeptide reads, in one-letter code: Methionine-R-sulfoxide reductase B3, mitochondrial (253 aa).

The signal sequence occupies residues 1-56 (MPPAAPSVARSREGGGIGQRRLVFPKSARRTLPCPIALCLGLCLAAAAATTTRASA). An N6-acetyllysine modification is found at Lys102. Residues 107–229 (QQELRKRLTP…NSASLSFTPA (123 aa)) form the MsrB domain. The Zn(2+) site is built by Cys146, Cys149, Cys195, and Cys198. Catalysis depends on Cys218, which acts as the Nucleophile. Positions 227–253 (TPADSSEAEGSGIKESGSPAAADRAEL) are disordered. Ser244 carries the phosphoserine modification. Positions 250-253 (RAEL) match the Endoplasmic reticulum retention signal motif.

This sequence belongs to the MsrB Met sulfoxide reductase family. In terms of assembly, monomer. Requires Zn(2+) as cofactor. In terms of tissue distribution, widely expressed. Detected in the sensory epithelia of the organ of Corti and vestibular end organs as early as P2 up to adulthood (at protein level). In the organ of Corti, present in inner and outer hair cells and, to a lesser extent, in supporting cells (at protein level). In hair cells, distributed throughout the cell body. Barely detectable level in stereocilia. Also observed in spiral ganglion neurons, but not in the stria vascularis. In the vestibular end organs, found throughout the sensory epithelium, but more intense expression in hair cells than in supporting cells (at protein level). In vestibular hair cells, present within cell bodies and to a lesser extent in kinocilia. Barely detectable in stereocilia.

The protein resides in the endoplasmic reticulum. It catalyses the reaction L-methionyl-[protein] + [thioredoxin]-disulfide + H2O = L-methionyl-(R)-S-oxide-[protein] + [thioredoxin]-dithiol. It carries out the reaction [thioredoxin]-disulfide + L-methionine + H2O = L-methionine (R)-S-oxide + [thioredoxin]-dithiol. Its function is as follows. Catalyzes the reduction of free and protein-bound methionine sulfoxide to methionine. This Mus musculus (Mouse) protein is Methionine-R-sulfoxide reductase B3, mitochondrial (Msrb3).